The chain runs to 475 residues: Equilibrative nucleoside transporter 3 (475 aa).

The Cytoplasmic segment spans residues M1–N51. The residue at position 21 (S21) is a Phosphoserine. The Dileucine internalization motif signature appears at L31–L32. Residues G52 to V72 traverse the membrane as a helical segment. Residues T73–S105 lie on the Extracellular side of the membrane. N-linked (GlcNAc...) asparagine glycosylation is present at N84. Residues Y106 to V126 form a helical membrane-spanning segment. Over N127 to R134 the chain is Cytoplasmic. Residues V135–V155 form a helical membrane-spanning segment. Residues D156–R162 lie on the Extracellular side of the membrane. The chain crosses the membrane as a helical span at residues G163–N183. The Cytoplasmic segment spans residues S184 to Q199. Residues A200 to L220 traverse the membrane as a helical segment. Over A221 to T230 the chain is Extracellular. A helical transmembrane segment spans residues L231 to L251. The Cytoplasmic segment spans residues S252–T305. Residues A306–I326 form a helical membrane-spanning segment. The Extracellular segment spans residues S327 to P340. The chain crosses the membrane as a helical span at residues W341 to C361. Residues G362 to K377 are Cytoplasmic-facing. The helical transmembrane segment at L378–Y398 threads the bilayer. Topologically, residues Q399 to P415 are extracellular. The helical transmembrane segment at V416–Y436 threads the bilayer. The Cytoplasmic portion of the chain corresponds to G437–S450. The helical transmembrane segment at V451–L471 threads the bilayer. Over E472 to I475 the chain is Extracellular.

This sequence belongs to the SLC29A/ENT transporter (TC 2.A.57) family. Expressed in macrophages.

The protein localises to the lysosome membrane. The protein resides in the late endosome membrane. It is found in the mitochondrion membrane. Its subcellular location is the cell membrane. It catalyses the reaction adenosine(in) = adenosine(out). The enzyme catalyses guanosine(in) = guanosine(out). It carries out the reaction inosine(in) = inosine(out). The catalysed reaction is uridine(out) = uridine(in). It catalyses the reaction cytidine(in) = cytidine(out). The enzyme catalyses thymidine(in) = thymidine(out). It carries out the reaction 2'-deoxyadenosine(in) = 2'-deoxyadenosine(out). The catalysed reaction is 2'-deoxycytidine(in) = 2'-deoxycytidine(out). It catalyses the reaction guanine(out) = guanine(in). The enzyme catalyses uracil(in) = uracil(out). It carries out the reaction (R)-noradrenaline(out) = (R)-noradrenaline(in). The catalysed reaction is dopamine(out) = dopamine(in). It catalyses the reaction serotonin(out) = serotonin(in). The enzyme catalyses tyramine(in) = tyramine(out). It carries out the reaction ATP(in) = ATP(out). In terms of biological role, uniporter that mediates the facilitative transport of nucleoside across lysosomal and mitochondrial membranes. Functions as a non-electrogenic Na(+)-independent transporter. Substrate transport is pH-dependent and enhanced under acidic condition, probably reflecting the location of the transporter in acidic intracellular compartments. Proton is not a cotransporting ion but most likely change the ionization state of the transporter which dictates transport-permissible/impermissible conformation for nucleoside translocation. May direct the nucleoside transport from lysosomes to cytosol or cytosol to mitochondria to facilitate the fundamental function of salvage synthesis of nucleic acids. Involved in the transport of nucleosides (adenosine, guanosine, uridine, thymidine, cytidine and inosine) and deoxynucleosides (deoxyadenosine, deoxycytidine). Also mediates transport of purine nucleobases (adenine, guanine), and pyrimidine nucleobases (uracil). Also able to transport monoamine neurotransmitters dopamine, serotonin, noradrenaline and tyramine. Capable of transporting ATP. Mediates nucleoside export from lysosomes in macrophages, which regulates macrophage functions and numbers. The sequence is that of Equilibrative nucleoside transporter 3 from Mus musculus (Mouse).